We begin with the raw amino-acid sequence, 207 residues long: High frequency lysogenization protein HflD homolog (207 aa).

The protein belongs to the HflD family.

The protein localises to the cytoplasm. Its subcellular location is the cell inner membrane. In Azotobacter vinelandii (strain DJ / ATCC BAA-1303), this protein is High frequency lysogenization protein HflD homolog.